The chain runs to 1382 residues: Hepatocyte growth factor receptor (1382 aa).

The signal sequence occupies residues 1-24 (MKAPAVLAPGVLVLLFTLVRKSHG). The Extracellular segment spans residues 25–935 (ECEEALAKSK…VQPDQNFTGL (911 aa)). Positions 27–516 (EEALAKSKMN…TGKKITKIPL (490 aa)) constitute a Sema domain. N-linked (GlcNAc...) asparagine glycosylation occurs at N45. Cystine bridges form between C95–C101, C98–C160, C133–C141, and C173–C176. N106 carries N-linked (GlcNAc...) asparagine glycosylation. Residues N203 and N359 are each glycosylated (N-linked (GlcNAc...) asparagine). Cystine bridges form between C299–C364 and C386–C398. 3 N-linked (GlcNAc...) asparagine glycosylation sites follow: N400, N406, and N450. Intrachain disulfides connect C521–C539, C527–C562, C530–C546, and C542–C552. 3 IPT/TIG domains span residues 564–656 (PTIY…FSYV), 658–740 (PVIT…FSYQ), and 743–837 (PTVY…LIYV). T583 carries O-linked (Man) threonine glycosylation. Residues N608 and N636 are each glycosylated (N-linked (GlcNAc...) asparagine). O-linked (Man) threonine glycosylation is present at T677. N751 carries N-linked (GlcNAc...) asparagine glycosylation. T762 carries an O-linked (Man) threonine glycan. N-linked (GlcNAc...) asparagine glycans are attached at residues N786, N880, and N931. A helical transmembrane segment spans residues 936 to 956 (IVGVVSISIILLLLLGLFLWL). At 957-1382 (KKRKQIKDLG…QDSVDDEVDT (426 aa)) the chain is on the cytoplasmic side. Position 967 is a phosphoserine (S967). Residue T978 is modified to Phosphothreonine. Phosphoserine is present on residues S991, S998, and S1001. The residue at position 1004 (Y1004) is a Phosphotyrosine. A Protein kinase domain is found at 1079–1346 (VHFNEVIGRG…RISAIFSTFI (268 aa)). ATP-binding positions include 1085–1093 (IGRGHFGCV) and K1111. Residue D1205 is the Proton acceptor of the active site. The interval 1213 to 1382 (LDEKFTVKVA…QDSVDDEVDT (170 aa)) is interaction with RANBP9. Y1231 bears the Phosphotyrosine mark. Phosphotyrosine; by autocatalysis occurs at positions 1235 and 1236. Residue T1290 is modified to Phosphothreonine. The segment at 1321–1360 (WHPKAEMRPSFSELVSRISAIFSTFIGEHYVHVNTTYVNV) is interaction with MUC20. 2 positions are modified to phosphotyrosine; by autocatalysis: Y1350 and Y1357. Position 1366 is a phosphotyrosine (Y1366).

Belongs to the protein kinase superfamily. Tyr protein kinase family. As to quaternary structure, heterodimer made of an alpha chain (50 kDa) and a beta chain (145 kDa) which are disulfide linked. Binds PLXNB1. Interacts when phosphorylated with downstream effectors including STAT3, PIK3R1, SRC, PCLG1, GRB2 and GAB1. Interacts with SPSB1, SPSB2 and SPSB4. Interacts with INPP5D/SHIP1. When phosphorylated at Tyr-1357, interacts with INPPL1/SHIP2. Interacts with RANBP9 and RANBP10, as well as SPSB1, SPSB2, SPSB3 and SPSB4. SPSB1 binding occurs in the presence and in the absence of HGF, however HGF treatment has a positive effect on this interaction. Interacts with MUC20; prevents interaction with GRB2 and suppresses hepatocyte growth factor-induced cell proliferation. Interacts with GRB10. Interacts with PTPN1 and PTPN2. Interacts with HSP90AA1 and HSP90AB1; the interaction suppresses MET kinase activity. Interacts with tensin TNS3. Interacts (when phosphorylated) with tensin TNS4 (via SH2 domain); the interaction increases MET protein stability by inhibiting MET endocytosis and subsequent lysosomal degradation. Autophosphorylated in response to ligand binding on Tyr-1235 and Tyr-1236 in the kinase domain leading to further phosphorylation of Tyr-1350 and Tyr-1357 in the C-terminal multifunctional docking site. Dephosphorylated by PTPRJ at Tyr-1350 and Tyr-1366. Dephosphorylated by PTPN1 and PTPN2. Post-translationally, ubiquitinated. Ubiquitination by CBL regulates the receptor stability and activity through proteasomal degradation. In terms of processing, O-mannosylation of IPT/TIG domains by TMEM260 is required for protein maturation. O-mannosylated residues are composed of single mannose glycans that are not elongated or modified.

It localises to the membrane. The catalysed reaction is L-tyrosyl-[protein] + ATP = O-phospho-L-tyrosyl-[protein] + ADP + H(+). In its inactive state, the C-terminal tail interacts with the catalytic domain and inhibits the kinase activity. Upon ligand binding, the C-terminal tail is displaced and becomes phosphorylated, thus increasing the kinase activity. Receptor tyrosine kinase that transduces signals from the extracellular matrix into the cytoplasm by binding to hepatocyte growth factor/HGF ligand. Regulates many physiological processes including proliferation, scattering, morphogenesis and survival. Ligand binding at the cell surface induces autophosphorylation of MET on its intracellular domain that provides docking sites for downstream signaling molecules. Following activation by ligand, interacts with the PI3-kinase subunit PIK3R1, PLCG1, SRC, GRB2, STAT3 or the adapter GAB1. Recruitment of these downstream effectors by MET leads to the activation of several signaling cascades including the RAS-ERK, PI3 kinase-AKT, or PLCgamma-PKC. The RAS-ERK activation is associated with the morphogenetic effects while PI3K/AKT coordinates prosurvival effects. During embryonic development, MET signaling plays a role in gastrulation, development and migration of muscles and neuronal precursors, angiogenesis and kidney formation. In adults, participates in wound healing as well as organ regeneration and tissue remodeling. Also promotes differentiation and proliferation of hematopoietic cells. The sequence is that of Hepatocyte growth factor receptor (MET) from Loxodonta africana (African elephant).